Here is a 141-residue protein sequence, read N- to C-terminus: Large ribosomal subunit protein uL14 (141 aa).

It belongs to the universal ribosomal protein uL14 family. As to quaternary structure, part of the 50S ribosomal subunit. Forms a cluster with proteins L3 and L24e, part of which may contact the 16S rRNA in 2 intersubunit bridges.

In terms of biological role, binds to 23S rRNA. Forms part of two intersubunit bridges in the 70S ribosome. The protein is Large ribosomal subunit protein uL14 of Pyrococcus furiosus (strain ATCC 43587 / DSM 3638 / JCM 8422 / Vc1).